Reading from the N-terminus, the 275-residue chain is Large ribosomal subunit protein uL2 (275 aa).

The disordered stretch occupies residues 222–275; the sequence is GVAMNPVDHPHGGGEGRNKGRHPTSPWGQKSKGLKTRNNKRTDSMIIRRRAKKK. Over residues 229–239 the composition is skewed to basic and acidic residues; it reads DHPHGGGEGRN.

This sequence belongs to the universal ribosomal protein uL2 family. Part of the 50S ribosomal subunit. Forms a bridge to the 30S subunit in the 70S ribosome.

Functionally, one of the primary rRNA binding proteins. Required for association of the 30S and 50S subunits to form the 70S ribosome, for tRNA binding and peptide bond formation. It has been suggested to have peptidyltransferase activity; this is somewhat controversial. Makes several contacts with the 16S rRNA in the 70S ribosome. This chain is Large ribosomal subunit protein uL2, found in Psychrobacter arcticus (strain DSM 17307 / VKM B-2377 / 273-4).